Here is a 468-residue protein sequence, read N- to C-terminus: MTQRVRTRFAPSPTGFIHLGNIRSALYPWAFARRMKGDFVLRIEDTDVERSSQEAVDVILEGMAWLGLDIDEGPFYQMQRMDRYREVLAQMVDSGLAYPCYMSTEELDALREAQRERGEKPRYNGFWRPEPGKVLPQPPAGVKPVLRFRNPLDGSVVWDDAVKGRIEISNEELDDLVIARPDGTPTYNFCVVVDDLDMKITHVIRGDDHVNNTPRQINIIRALGGTQPVYAHLPTVLNESGEKMSKRHGAMSVTGYRDEGYLPEAVVNYLARLGWAHGDAEIFSREQFVEWFDLEHLGKSPAQYNPEKLAWLNNHYIKVGDNARLAELTRPFIEALGGKVEGADLVGVIALVKDRANTLKDVAQTALLFYRGEPQADAALKAEHLTPEIQPALKALATQLGALPEWKREAISATFKAVLAEFGLKMPKLAMPVRLLVAGQLQTPSIDAVLELFGREAVLRRIGAGVEA.

A 'HIGH' region motif is present at residues 11–21 (PSPTGFIHLGN). The short motif at 243–247 (KMSKR) is the 'KMSKS' region element. Lysine 246 contributes to the ATP binding site.

Belongs to the class-I aminoacyl-tRNA synthetase family. Glutamate--tRNA ligase type 1 subfamily. Monomer.

Its subcellular location is the cytoplasm. It carries out the reaction tRNA(Glu) + L-glutamate + ATP = L-glutamyl-tRNA(Glu) + AMP + diphosphate. Catalyzes the attachment of glutamate to tRNA(Glu) in a two-step reaction: glutamate is first activated by ATP to form Glu-AMP and then transferred to the acceptor end of tRNA(Glu). The polypeptide is Glutamate--tRNA ligase (Cupriavidus pinatubonensis (strain JMP 134 / LMG 1197) (Cupriavidus necator (strain JMP 134))).